Consider the following 273-residue polypeptide: Ribosomal RNA small subunit methyltransferase A (273 aa).

The S-adenosyl-L-methionine site is built by asparagine 18, leucine 20, glycine 45, glutamate 66, aspartate 91, and asparagine 113.

It belongs to the class I-like SAM-binding methyltransferase superfamily. rRNA adenine N(6)-methyltransferase family. RsmA subfamily.

The protein localises to the cytoplasm. The catalysed reaction is adenosine(1518)/adenosine(1519) in 16S rRNA + 4 S-adenosyl-L-methionine = N(6)-dimethyladenosine(1518)/N(6)-dimethyladenosine(1519) in 16S rRNA + 4 S-adenosyl-L-homocysteine + 4 H(+). In terms of biological role, specifically dimethylates two adjacent adenosines (A1518 and A1519) in the loop of a conserved hairpin near the 3'-end of 16S rRNA in the 30S particle. May play a critical role in biogenesis of 30S subunits. The chain is Ribosomal RNA small subunit methyltransferase A from Shigella flexneri.